The primary structure comprises 342 residues: Holliday junction branch migration complex subunit RuvB (342 aa).

The interval 1-179 (MTSILSPEKS…FGIPMRLNFY (179 aa)) is large ATPase domain (RuvB-L). ATP contacts are provided by residues L18, R19, G60, K63, T64, T65, 126-128 (EDF), R169, Y179, and R216. Position 64 (T64) interacts with Mg(2+). A small ATPAse domain (RuvB-S) region spans residues 180 to 250 (NTEELKKVLN…IANFGLNRLE (71 aa)). A head domain (RuvB-H) region spans residues 253–342 (IIGLDSNDYR…HQFNIFNDNE (90 aa)). DNA contacts are provided by R289, R308, and R313.

This sequence belongs to the RuvB family. In terms of assembly, homohexamer. Forms an RuvA(8)-RuvB(12)-Holliday junction (HJ) complex. HJ DNA is sandwiched between 2 RuvA tetramers; dsDNA enters through RuvA and exits via RuvB. An RuvB hexamer assembles on each DNA strand where it exits the tetramer. Each RuvB hexamer is contacted by two RuvA subunits (via domain III) on 2 adjacent RuvB subunits; this complex drives branch migration. In the full resolvosome a probable DNA-RuvA(4)-RuvB(12)-RuvC(2) complex forms which resolves the HJ.

It is found in the cytoplasm. The enzyme catalyses ATP + H2O = ADP + phosphate + H(+). Its function is as follows. The RuvA-RuvB-RuvC complex processes Holliday junction (HJ) DNA during genetic recombination and DNA repair, while the RuvA-RuvB complex plays an important role in the rescue of blocked DNA replication forks via replication fork reversal (RFR). RuvA specifically binds to HJ cruciform DNA, conferring on it an open structure. The RuvB hexamer acts as an ATP-dependent pump, pulling dsDNA into and through the RuvAB complex. RuvB forms 2 homohexamers on either side of HJ DNA bound by 1 or 2 RuvA tetramers; 4 subunits per hexamer contact DNA at a time. Coordinated motions by a converter formed by DNA-disengaged RuvB subunits stimulates ATP hydrolysis and nucleotide exchange. Immobilization of the converter enables RuvB to convert the ATP-contained energy into a lever motion, pulling 2 nucleotides of DNA out of the RuvA tetramer per ATP hydrolyzed, thus driving DNA branch migration. The RuvB motors rotate together with the DNA substrate, which together with the progressing nucleotide cycle form the mechanistic basis for DNA recombination by continuous HJ branch migration. Branch migration allows RuvC to scan DNA until it finds its consensus sequence, where it cleaves and resolves cruciform DNA. The sequence is that of Holliday junction branch migration complex subunit RuvB from Rickettsia bellii (strain RML369-C).